We begin with the raw amino-acid sequence, 341 residues long: Fructose-1,6-bisphosphatase, cytosolic (341 aa).

Mg(2+) is bound by residues glutamate 71, glutamate 100, aspartate 121, leucine 123, and aspartate 124. Residues 124-127 (DGCS), asparagine 215, tyrosine 247, tyrosine 267, and lysine 277 each bind substrate. Glutamate 283 is a binding site for Mg(2+).

Belongs to the FBPase class 1 family. Mg(2+) serves as cofactor.

It is found in the cytoplasm. The enzyme catalyses beta-D-fructose 1,6-bisphosphate + H2O = beta-D-fructose 6-phosphate + phosphate. This chain is Fructose-1,6-bisphosphatase, cytosolic, found in Beta vulgaris (Sugar beet).